The chain runs to 305 residues: Polyamine aminopropyltransferase 2 (305 aa).

A PABS domain is found at tryptophan 7–aspartate 242. Residue glutamine 36 participates in S-methyl-5'-thioadenosine binding. Spermidine-binding residues include histidine 67 and glutamate 91. Residues aspartate 111 and aspartate 143–glycine 144 each bind S-methyl-5'-thioadenosine. Aspartate 161 (proton acceptor) is an active-site residue. Proline 170 lines the S-methyl-5'-thioadenosine pocket.

This sequence belongs to the spermidine/spermine synthase family. Homodimer or homotetramer.

The protein localises to the cytoplasm. The enzyme catalyses S-adenosyl 3-(methylsulfanyl)propylamine + propane-1,3-diamine = norspermidine + S-methyl-5'-thioadenosine + H(+). Functionally, involved in the biosynthesis of polyamines which are thought to support the growth of thermophilic microorganisms under high-temperature conditions. It seems that long-chain and branched-chain of polyamines effectively stabilize DNA and RNA, respectively. Catalyzes the irreversible transfer of a propylamine group from the amino donor S-adenosylmethioninamine (decarboxy-AdoMet) to 1,3-diaminopropane to yield sym-norspermidine (bis(3-aminopropyl)amine). It can also synthesize thermospermine from spermidine with a very low activity. The chain is Polyamine aminopropyltransferase 2 from Hyperthermus butylicus (strain DSM 5456 / JCM 9403 / PLM1-5).